The primary structure comprises 513 residues: ETS translocation variant 3 (513 aa).

A DNA-binding region (ETS) is located at residues isoleucine 35 to asparagine 116. Residues glutamine 138 to tryptophan 202 form a disordered region. Serine 139, serine 159, and serine 315 each carry phosphoserine. The segment at glutamine 333–alanine 513 is disordered. Basic and acidic residues-rich tracts occupy residues glutamate 357–valine 366, isoleucine 380–serine 392, and glycine 399–lysine 419. Residue lysine 381 forms a Glycyl lysine isopeptide (Lys-Gly) (interchain with G-Cter in SUMO2) linkage. Lysine 388 carries the N6-acetyllysine; alternate modification. Residue lysine 388 forms a Glycyl lysine isopeptide (Lys-Gly) (interchain with G-Cter in SUMO2); alternate linkage. Polar residues predominate over residues tryptophan 430–serine 439. Over residues glutamate 441 to glutamate 450 the composition is skewed to acidic residues. Composition is skewed to basic and acidic residues over residues aspartate 451–alanine 466 and arginine 477–lysine 489. The span at alanine 504–alanine 513 shows a compositional bias: low complexity.

Belongs to the ETS family.

The protein resides in the nucleus. Transcriptional repressor that contribute to growth arrest during terminal macrophage differentiation by repressing target genes involved in Ras-dependent proliferation. Represses MMP1 promoter activity. The sequence is that of ETS translocation variant 3 (Etv3) from Mus musculus (Mouse).